The following is a 151-amino-acid chain: UPF0178 protein Desal_2673 (151 aa).

This sequence belongs to the UPF0178 family.

The polypeptide is UPF0178 protein Desal_2673 (Maridesulfovibrio salexigens (strain ATCC 14822 / DSM 2638 / NCIMB 8403 / VKM B-1763) (Desulfovibrio salexigens)).